Consider the following 490-residue polypeptide: tRNA-guanine(15) transglycosylase (490 aa).

The Nucleophile role is filled by D92. Positions 127 and 195 each coordinate substrate. Positions 278, 280, and 283 each coordinate Zn(2+).

This sequence belongs to the archaeosine tRNA-ribosyltransferase family. Requires Zn(2+) as cofactor.

The catalysed reaction is guanosine(15) in tRNA + 7-cyano-7-deazaguanine = 7-cyano-7-carbaguanosine(15) in tRNA + guanine. The protein operates within tRNA modification; archaeosine-tRNA biosynthesis. Its function is as follows. Exchanges the guanine residue with 7-cyano-7-deazaguanine (preQ0) at position 15 in the dihydrouridine loop (D-loop) of archaeal tRNAs. The protein is tRNA-guanine(15) transglycosylase of Haloarcula marismortui (strain ATCC 43049 / DSM 3752 / JCM 8966 / VKM B-1809) (Halobacterium marismortui).